We begin with the raw amino-acid sequence, 73 residues long: Sec-independent protein translocase protein TatA (73 aa).

A helical membrane pass occupies residues 1 to 21 (MGSFSIGHWLIVLAIIVLLFG). Residues 43–73 (MEDTTPEKSEKVEHKEESATSQKIEETTKNA) are disordered.

The protein belongs to the TatA/E family. In terms of assembly, the Tat system comprises two distinct complexes: a TatABC complex, containing multiple copies of TatA, TatB and TatC subunits, and a separate TatA complex, containing only TatA subunits. Substrates initially bind to the TatABC complex, which probably triggers association of the separate TatA complex to form the active translocon.

The protein localises to the cell inner membrane. Its function is as follows. Part of the twin-arginine translocation (Tat) system that transports large folded proteins containing a characteristic twin-arginine motif in their signal peptide across membranes. TatA could form the protein-conducting channel of the Tat system. This is Sec-independent protein translocase protein TatA from Campylobacter concisus (strain 13826).